The following is a 92-amino-acid chain: Co-chaperonin GroES (92 aa).

This sequence belongs to the GroES chaperonin family. As to quaternary structure, heptamer of 7 subunits arranged in a ring. Interacts with the chaperonin GroEL.

The protein localises to the cytoplasm. Functionally, together with the chaperonin GroEL, plays an essential role in assisting protein folding. The GroEL-GroES system forms a nano-cage that allows encapsulation of the non-native substrate proteins and provides a physical environment optimized to promote and accelerate protein folding. GroES binds to the apical surface of the GroEL ring, thereby capping the opening of the GroEL channel. In Thermotoga maritima (strain ATCC 43589 / DSM 3109 / JCM 10099 / NBRC 100826 / MSB8), this protein is Co-chaperonin GroES.